We begin with the raw amino-acid sequence, 76 residues long: Conotoxin Gla(1)-TxVI (76 aa).

The signal sequence occupies residues 1 to 19 (MEKLTILLLVAAVLMSTQA). The propeptide occupies 20–45 (LVERAGENHSKENINFLLKRKRAADR). 6'-bromotryptophan is present on Trp48. Glu50 is modified (4-carboxyglutamate). Intrachain disulfides connect Cys51–Cys65, Cys58–Cys69, and Cys64–Cys73. Pro61 carries the 4-hydroxyproline modification. 4-carboxyglutamate occurs at positions 63, 67, and 70. Trp76 carries the 6'-bromotryptophan modification.

As to expression, expressed by the venom duct.

It is found in the secreted. This is Conotoxin Gla(1)-TxVI from Conus textile (Cloth-of-gold cone).